We begin with the raw amino-acid sequence, 385 residues long: 1-deoxy-D-xylulose 5-phosphate reductoisomerase (385 aa).

The NADPH site is built by threonine 11, glycine 12, serine 13, isoleucine 14, asparagine 39, and asparagine 123. 1-deoxy-D-xylulose 5-phosphate is bound at residue lysine 124. Glutamate 125 provides a ligand contact to NADPH. Aspartate 149 contributes to the Mn(2+) binding site. Residues serine 150, glutamate 151, serine 174, and histidine 197 each coordinate 1-deoxy-D-xylulose 5-phosphate. Glutamate 151 provides a ligand contact to Mn(2+). Position 203 (glycine 203) interacts with NADPH. Positions 210, 215, 216, and 219 each coordinate 1-deoxy-D-xylulose 5-phosphate. Glutamate 219 provides a ligand contact to Mn(2+).

It belongs to the DXR family. Mg(2+) is required as a cofactor. The cofactor is Mn(2+).

The enzyme catalyses 2-C-methyl-D-erythritol 4-phosphate + NADP(+) = 1-deoxy-D-xylulose 5-phosphate + NADPH + H(+). It functions in the pathway isoprenoid biosynthesis; isopentenyl diphosphate biosynthesis via DXP pathway; isopentenyl diphosphate from 1-deoxy-D-xylulose 5-phosphate: step 1/6. Functionally, catalyzes the NADPH-dependent rearrangement and reduction of 1-deoxy-D-xylulose-5-phosphate (DXP) to 2-C-methyl-D-erythritol 4-phosphate (MEP). The protein is 1-deoxy-D-xylulose 5-phosphate reductoisomerase of Porphyromonas gingivalis (strain ATCC 33277 / DSM 20709 / CIP 103683 / JCM 12257 / NCTC 11834 / 2561).